The following is a 125-amino-acid chain: Fatty acid-binding protein, liver-type (125 aa).

Belongs to the calycin superfamily. Fatty-acid binding protein (FABP) family.

The protein localises to the cytoplasm. This is Fatty acid-binding protein, liver-type (fabp1) from Takifugu rubripes (Japanese pufferfish).